Consider the following 178-residue polypeptide: Large ribosomal subunit protein uL6 (178 aa).

It belongs to the universal ribosomal protein uL6 family. In terms of assembly, part of the 50S ribosomal subunit.

Functionally, this protein binds to the 23S rRNA, and is important in its secondary structure. It is located near the subunit interface in the base of the L7/L12 stalk, and near the tRNA binding site of the peptidyltransferase center. In Streptococcus pneumoniae serotype 4 (strain ATCC BAA-334 / TIGR4), this protein is Large ribosomal subunit protein uL6.